A 384-amino-acid chain; its full sequence is Putative pectate lyase 2 (384 aa).

Residues 1–23 (MASLFLTIISLLFAAFSSSVVEA) form the signal peptide. Positions 182, 206, and 210 each coordinate Ca(2+). R262 is a catalytic residue.

Belongs to the polysaccharide lyase 1 family. Ca(2+) serves as cofactor.

It carries out the reaction Eliminative cleavage of (1-&gt;4)-alpha-D-galacturonan to give oligosaccharides with 4-deoxy-alpha-D-galact-4-enuronosyl groups at their non-reducing ends.. Its pathway is glycan metabolism; pectin degradation; 2-dehydro-3-deoxy-D-gluconate from pectin: step 2/5. The polypeptide is Putative pectate lyase 2 (Arabidopsis thaliana (Mouse-ear cress)).